A 213-amino-acid chain; its full sequence is Pyridoxine/pyridoxamine 5'-phosphate oxidase (213 aa).

Substrate-binding positions include 9-12 (RLEY) and Lys67. Residues 62-67 (RIVLLK), 77-78 (YT), Arg83, Lys84, and Gln106 each bind FMN. Residues Tyr124, Arg128, and Ser132 each contribute to the substrate site. Residues 141 to 142 (QS) and Trp185 contribute to the FMN site. Position 191–193 (191–193 (RLH)) interacts with substrate. An FMN-binding site is contributed by Arg195.

This sequence belongs to the pyridoxamine 5'-phosphate oxidase family. As to quaternary structure, homodimer. It depends on FMN as a cofactor.

The enzyme catalyses pyridoxamine 5'-phosphate + O2 + H2O = pyridoxal 5'-phosphate + H2O2 + NH4(+). The catalysed reaction is pyridoxine 5'-phosphate + O2 = pyridoxal 5'-phosphate + H2O2. It participates in cofactor metabolism; pyridoxal 5'-phosphate salvage; pyridoxal 5'-phosphate from pyridoxamine 5'-phosphate: step 1/1. Its pathway is cofactor metabolism; pyridoxal 5'-phosphate salvage; pyridoxal 5'-phosphate from pyridoxine 5'-phosphate: step 1/1. Functionally, catalyzes the oxidation of either pyridoxine 5'-phosphate (PNP) or pyridoxamine 5'-phosphate (PMP) into pyridoxal 5'-phosphate (PLP). This chain is Pyridoxine/pyridoxamine 5'-phosphate oxidase, found in Chromobacterium violaceum (strain ATCC 12472 / DSM 30191 / JCM 1249 / CCUG 213 / NBRC 12614 / NCIMB 9131 / NCTC 9757 / MK).